An 86-amino-acid chain; its full sequence is uncharacterized protein (86 aa).

It to M.jannaschii MJ1173.

This is an uncharacterized protein from Methanosarcina mazei (strain ATCC BAA-159 / DSM 3647 / Goe1 / Go1 / JCM 11833 / OCM 88) (Methanosarcina frisia).